A 623-amino-acid polypeptide reads, in one-letter code: Glutamyl-tRNA(Gln) amidotransferase subunit E (623 aa).

The protein belongs to the GatB/GatE family. GatE subfamily. As to quaternary structure, heterodimer of GatD and GatE.

The enzyme catalyses L-glutamyl-tRNA(Gln) + L-glutamine + ATP + H2O = L-glutaminyl-tRNA(Gln) + L-glutamate + ADP + phosphate + H(+). Its function is as follows. Allows the formation of correctly charged Gln-tRNA(Gln) through the transamidation of misacylated Glu-tRNA(Gln) in organisms which lack glutaminyl-tRNA synthetase. The reaction takes place in the presence of glutamine and ATP through an activated gamma-phospho-Glu-tRNA(Gln). The GatDE system is specific for glutamate and does not act on aspartate. The protein is Glutamyl-tRNA(Gln) amidotransferase subunit E of Haloarcula marismortui (strain ATCC 43049 / DSM 3752 / JCM 8966 / VKM B-1809) (Halobacterium marismortui).